The following is a 3096-amino-acid chain: MGRNQRKAPQRLERPGRPASGEQESGSASADGAPSRERRSDRGQADRAKPAAEPATAGGQGTPGGRRKPTAEGNGGCRRPGAGLSPKAQERQSNAQRQGRGPRGGRGGRLEEGSLSGGEELGGRRRRKRKDKGPSARRGRRTPRSLNGDTSGGDGGSSCPDSETREAQESGSQRGTARELRPTPEPTDMGSEGTKTGPESALEPSSDGLDSDWPHADTRGREGSSGTGPLGASEHSGGDSDSSPLGTGPGRGSRAAMASRTFEDSSRAPRDTGPAKDASDNRAQRGAEPETMQASTARAPRHQVGKAVGQVPAAAGEGEAGAAAGAGPEDPAPLAALLVVRRLLARPPPGAASQAVGPRRAGLKERLLSVARALGLLRWLRRRLRLRRRPPEGEGQGTGPRASEGWGRRKPDEGRGHGRGSKGRGRGKADEGRGHERGDEGRGRGKADEGRGHERGYEGRGCGKADEGRGHERGDEGRDHQRGYEGWGREPGLRHRLALRLAGLAGLGGMPRASPGGRSPQVPTSPVPGDPFDQEDETPDPKFAVVFPRIHRAGRASSSRSSEEASADAPTGEGRGWPRAGVGGHSEGCRTSGEGVSGLRRGSLLAPTAPDGPSLDESGSSSEAELETLNDEPPVRWAQGSGPHEGPRLGAAVLLPRLSLETRLQQEGDPGLRGSLRELWEPEDEDEAVLERDLELSLRPGLEAPPFPGAKGRSLGDGLEDMEDLARLRLVCDSSVLLCLKKRFHLGRIYTFGGPVLLVLNPHRSLPLFSPEVQASYHPRKALSTTPHIFAIVASAYDLAQNTGQDPCILLCSSHCSGHSGSGKTEAAKKIMQFLSSLEQDQTGNRECQVEDMLPILSSFGHAKTILNANASRFGQVFCLYLQQGVIVGASVSHYLLETSRVVFQAQAERSFHVFYKLLAGLDSIERERLSLQGPETYYYLNQGQACRLQGKEDAQDFEGLLKALQGLGLCPEELNAVWAVLAAILQLGNICFSSSERESQEVAAVSSWAEIHTAARLLRVPPECLEGAVTRRVTETPYGQVSRSLPVESAFDARDALAKALYSRLFHRLLRRTNARLAPPGEGGSIGTVTVVDAYGFEALRVNGLEQLCNNLASERLQLFSSQMLLAQEEEECRRELLSWVPVPQPPRESCLDLLVDQPHSLLSILDAQTWLSQATDHTFLQKSHYHHGDHPSYAKPRLPLPVFTVRHYAGTVTYQVHKFLNRNRDQLDPAVVEMLGQSQLQLVGSLFQEAEPQSRGGRGRPTLASRFQQALEDLIARLGRSHVYFIQCLTPNPGKLPGLFDVGHVTEQLHQAAILEAVGTRSANFPVRVPFEAFLASFQALGSEGQEDLSDREKCGAVLSQVLGAESPLYHLGATKVLLQEQGWQRLEELRDQQRSQALVDLHRSFHTCISRQRVLPRMQARMRGFQARKRYLRRRAALGQLNTILLVAQPLLQRRQRLQLGRWQGWHSSERALERVPSMELGRLEIPAELAVMLKTAESHRDALAGSITECLPPEVPARPSLTLPADIDLFPFSSFVAIGFQEPSLPRPGQPLAKPLTQLDGDNPQRALDINKVMLRLLGDGSLESWQRQIMGAYLVRQGQCRPGLRNELFSQLVAQLWQNPDEQQSQRGWALMAVLLSAFPPLPVLQKPLLKFVSDQAPRGMAALCQHKLLGALEQSQLASGATRAHPPTQLEWLAGWRRGRMALDVFTFSEECYSAEVESWTTGEQLAGWILQSRGLEAPPRGWSVSLHSRDAWQDLAGCDFVLDLISQTEDLGDPARPRSYPITPLGSAEAIPLAPGIQAPSLPPGPPPGPAPTLPSRDHTGEVQRSGSLDGFLDQIFQPVISSGLSDLEQSWALSSRMKGGGAIGPTQQGYPMVYPGMIQMPAYQPGMVPAPMPMMPAMGTVPAMPAMVVPPQPPLPSLDAGQLAVQQQNFIQQQALILAQQMTAQAMSLSLEQQMQQRQQQARASEAASQASPSAVTSKPRKPPTPPEKPQRDLGSEGGCLRETSEEAEDRPYQPKSFQQKRNYFQRMGQPQITVRTMKPPAKVHIPQGEAQEEEEEEEEEEEQEEQEVETRAVPSPPPPPIVKKPLKQGGAKAPKEAEAEPAKETAAKGHGQGPAQGRGTVVRSSDSKPKRPQPSREIGNIIRMYQSRPGPVPVPVQPSRPPKAFLRKIDPKDEALAKLGINGAHSSPPMLSPSPGKGPPPAVAPRPKAPLQLGPSSSIKEKQGPLLDLFGQKLPIAHTPPPPPAPPLPLPEDPGTLSAERRCLTQPVEDQGVSTQLLAPSGSVCFSYTGTPWKLFLRKEVFYPRENFSHPYYLRLLCEQILRDTFSESCIRISQNERRKMKDLLGGLEVDLDSLTTTEDSVKKRIVVAARDNWANYFSRFFPVSGESGSDVQLLAVSHRGLRLLKVTQGPGLRPDQLKILCSYSFAEVLGVECRGGSTLELSLKSEQLVLHTARARAIEALVELFLNELKKDSGYVIALRSYITDNCSLLSFHRGDLIKLLPVATLEPGWQFGSAGGRSGLFPADIVQPAAAPDFSFSKEQRSGWHKGQLSNGEPGLARWDRASERPAHPWSQAHSDDSEATSLSSVAYAFLPDSHSYTMQEFARRYFRRSQALLGQTDGGAAGKDTDSLVQYTKAPIQESLLSLSDDVSKLAVASFLALMRFMGDQSKPRGKDEMDLLYELLKLCQQEKLRDEIYCQVIKQVTGHPRPEHCTRGWSFLSLLTGFFPPSTRLMPYLTKFLQDSGPSQELARSSQEHLQRTVKYGGRRRMPPPGEMKAFLKGQAIRLLLIHLPGGVDYRTNIQTFTVAAEVQEELCRQMGITEPQEVQEFALFLIKEKSQLVRPLQPAEYLNSVVVDQDVSLHSRRLHWETPLHFDNSTYISTHYSQVLWDYLQGKLPVSAKADAQLARLAALQHLSKANRNTPSGQDLLAYVPKQLQRQVNTASIKNLMGQELRRLEGHSPQEAQISFIEAMSQLPLFGYTVYGVLRVSMQALSGPTLLGLNRQHLILMDPSSQSLYCRIALKSLQRLHLLSPLEEKGPPGLEVNYGSADNPQTIWFELPQAQELLYTTVFLIDSSASCTEWPSIN.

Disordered regions lie at residues 1–330 (MGRN…GPED), 389–489 (RPPE…GWGR), 508–540 (GGMP…ETPD), and 553–649 (AGRA…GPRL). Over residues 19 to 33 (ASGEQESGSASADGA) the composition is skewed to low complexity. Residues 34 to 50 (PSRERRSDRGQADRAKP) show a composition bias toward basic and acidic residues. Basic residues predominate over residues 124-143 (RRRRKRKDKGPSARRGRRTP). 2 stretches are compositionally biased toward basic and acidic residues: residues 212-222 (DWPHADTRGRE) and 261-288 (TFED…RGAE). Residues 307–330 (AVGQVPAAAGEGEAGAAAGAGPED) show a composition bias toward low complexity. Over residues 406–416 (WGRRKPDEGRG) the composition is skewed to basic and acidic residues. The span at 417–426 (HGRGSKGRGR) shows a compositional bias: basic residues. The segment covering 427–489 (GKADEGRGHE…HQRGYEGWGR (63 aa)) has biased composition (basic and acidic residues). The Myosin motor domain maps to 720–1394 (EDMEDLARLR…GWQRLEELRD (675 aa)). 818–825 (GHSGSGKT) lines the ATP pocket. The actin-binding stretch occupies residues 1273–1295 (LEDLIARLGRSHVYFIQCLTPNP). An IQ domain is found at 1414-1443 (RQRVLPRMQARMRGFQARKRYLRRRAALGQ). Positions 1551–1702 (RPGQPLAKPL…PTQLEWLAGW (152 aa)) constitute a MyTH4 1 domain. 3 disordered regions span residues 1802 to 1833 (PGIQ…VQRS), 1963 to 2026 (MQQR…PKSF), and 2040 to 2262 (QITV…LPED). Over residues 1808-1820 (SLPPGPPPGPAPT) the composition is skewed to pro residues. A compositionally biased stretch (low complexity) spans 1963-1980 (MQQRQQQARASEAASQAS). Positions 2059–2076 (AQEEEEEEEEEEEQEEQE) are enriched in acidic residues. Over residues 2102 to 2116 (APKEAEAEPAKETAA) the composition is skewed to basic and acidic residues. Over residues 2159–2170 (GPVPVPVQPSRP) the composition is skewed to pro residues. The span at 2176–2185 (RKIDPKDEAL) shows a compositional bias: basic and acidic residues. 2 stretches are compositionally biased toward pro residues: residues 2199–2217 (MLSP…PRPK) and 2247–2261 (HTPP…PLPE). Residues 2481 to 2542 (KDSGYVIALR…PADIVQPAAA (62 aa)) enclose the SH3 domain. Residues 2548 to 2567 (SKEQRSGWHKGQLSNGEPGL) form a disordered region. One can recognise a MyTH4 2 domain in the interval 2643-2789 (YTKAPIQESL…PPPGEMKAFL (147 aa)). Residues 2795 to 3096 (RLLLIHLPGG…ASCTEWPSIN (302 aa)) form the FERM domain.

The protein belongs to the TRAFAC class myosin-kinesin ATPase superfamily. Myosin family. Detected in brain, stomach and kidney.

The protein localises to the cytoplasm. The polypeptide is Unconventional myosin-XVB (Homo sapiens (Human)).